The sequence spans 135 residues: Congerin-1 (135 aa).

At Ser-1 the chain carries N-acetylserine. In terms of domain architecture, Galectin spans 3-135 (GLQVKNFDFT…GDARLTLVKE (133 aa)). 70–76 (WETEQRS) contacts a beta-D-galactoside.

Homodimer.

Its function is as follows. This protein binds beta-galactoside. Its physiological function is not yet known. This Conger myriaster (Conger eel) protein is Congerin-1.